The chain runs to 430 residues: Enolase (430 aa).

A (2R)-2-phosphoglycerate-binding site is contributed by glutamine 166. Glutamate 208 acts as the Proton donor in catalysis. Mg(2+) is bound by residues aspartate 245, glutamate 288, and aspartate 315. Positions 340, 369, 370, and 391 each coordinate (2R)-2-phosphoglycerate. The Proton acceptor role is filled by lysine 340.

It belongs to the enolase family. Mg(2+) serves as cofactor.

It is found in the cytoplasm. The protein resides in the secreted. It localises to the cell surface. It carries out the reaction (2R)-2-phosphoglycerate = phosphoenolpyruvate + H2O. Its pathway is carbohydrate degradation; glycolysis; pyruvate from D-glyceraldehyde 3-phosphate: step 4/5. In terms of biological role, catalyzes the reversible conversion of 2-phosphoglycerate (2-PG) into phosphoenolpyruvate (PEP). It is essential for the degradation of carbohydrates via glycolysis. This is Enolase from Clostridium kluyveri (strain NBRC 12016).